Here is a 389-residue protein sequence, read N- to C-terminus: Large envelope protein (389 aa).

At M1 the chain carries N-acetylmethionine. G2 is lipidated: N-myristoyl glycine; by host. The tract at residues 2–108 (GTNLSVPNPL…PPLRDTHPQA (107 aa)) is pre-S1. The interval 2-163 (GTNLSVPNPL…LSTTGDPVPN (162 aa)) is pre-S. The Virion surface; in external conformation segment spans residues 2–170 (GTNLSVPNPL…VPNMENIASG (169 aa)). The Intravirion; in internal conformation portion of the chain corresponds to 2-242 (GTNLSVPNPL…PGYRWMCLRR (241 aa)). The pre-S2 stretch occupies residues 109–163 (MQWNSTTFHQTLQDPRVRALYFPAGGSSSGTVNPVQNTASSISSILSTTGDPVPN). The helical transmembrane segment at 171 to 191 (LLGPLLVLQAGFFSLTKILTI) threads the bilayer. Topologically, residues 192-242 (PLSLDSWWTSLNFLGETPVCLGQNSQSQISSHSPTCCPPICPGYRWMCLRR) are intravirion; in external conformation. Residues 243–263 (FIIFLCILLLCLIFLLVLLDY) traverse the membrane as a helical segment. At 264 to 337 (QGMLPVCPLI…WASVRFSWLS (74 aa)) the chain is on the virion surface side. N309 carries an N-linked (GlcNAc...) asparagine; by host glycan. A helical membrane pass occupies residues 338–358 (LLVPFVQWFVGLSPTVWLSVI). The Intravirion segment spans residues 359–364 (WMMWFW). The chain crosses the membrane as a helical span at residues 365-387 (GPSLYNILSPFMPLLPIFFCLWV). Residues 388–389 (YI) lie on the Virion surface side of the membrane.

The protein belongs to the orthohepadnavirus major surface antigen family. As to quaternary structure, interacts (via its myristoylated pre-S1 region) with the host SLC10A1/NTCP; this interaction is essential for viral entry. In terms of assembly, in its internal form (Li-HBsAg), interacts with the capsid protein and with the isoform S. Interacts with host chaperone CANX. Associates with host chaperone CANX through its pre-S2 N glycan; this association may be essential for isoform M proper secretion. As to quaternary structure, interacts with isoform L. Interacts with the antigens of satellite virus HDV (HDVAgs); this interaction is required for encapsidation of HDV genomic RNA. Isoform M is N-terminally acetylated by host at a ratio of 90%, and N-glycosylated by host at the pre-S2 region. In terms of processing, myristoylated; this modification is essential for its interaction with the host protein SLC10A1/NTCP.

It is found in the virion membrane. Functionally, the large envelope protein exists in two topological conformations, one which is termed 'external' or Le-HBsAg and the other 'internal' or Li-HBsAg. In its external conformation the protein attaches the virus to cell receptors and thereby initiating infection. This interaction determines the species specificity and liver tropism. This attachment induces virion internalization predominantly through caveolin-mediated endocytosis. The large envelope protein also assures fusion between virion membrane and endosomal membrane. In its internal conformation the protein plays a role in virion morphogenesis and mediates the contact with the nucleocapsid like a matrix protein. The middle envelope protein plays an important role in the budding of the virion. It is involved in the induction of budding in a nucleocapsid independent way. In this process the majority of envelope proteins bud to form subviral lipoprotein particles of 22 nm of diameter that do not contain a nucleocapsid. The sequence is that of Large envelope protein from Hepatitis B virus genotype B2 (isolate Indonesia/pIDW420/1988) (HBV-B).